The chain runs to 359 residues: NADH-quinone oxidoreductase subunit H (359 aa).

8 helical membrane-spanning segments follow: residues 16–36 (IWPATVWPVLWVLIKIVAVLA), 94–114 (GLFILGPIMTIMPALAAWAVI), 128–148 (GLLFIMAITSLEVYGVIIAGW), 167–187 (VSYEIAMGFCLVVVLMVSGSL), 205–225 (GLTFLSWNWLPLLPIFVVYFI), 261–281 (FFLAEYANMILVSVLCVLLFL), 296–316 (IPGWIWLGLKTFVVVTIFLWV), and 331–351 (LGWKIFIPVTLVWLVVVGAWM).

The protein belongs to the complex I subunit 1 family. In terms of assembly, NDH-1 is composed of 14 different subunits. Subunits NuoA, H, J, K, L, M, N constitute the membrane sector of the complex.

The protein localises to the cell inner membrane. The catalysed reaction is a quinone + NADH + 5 H(+)(in) = a quinol + NAD(+) + 4 H(+)(out). Functionally, NDH-1 shuttles electrons from NADH, via FMN and iron-sulfur (Fe-S) centers, to quinones in the respiratory chain. The immediate electron acceptor for the enzyme in this species is believed to be ubiquinone. Couples the redox reaction to proton translocation (for every two electrons transferred, four hydrogen ions are translocated across the cytoplasmic membrane), and thus conserves the redox energy in a proton gradient. This subunit may bind ubiquinone. The polypeptide is NADH-quinone oxidoreductase subunit H (Polaromonas naphthalenivorans (strain CJ2)).